Consider the following 266-residue polypeptide: HLA class II histocompatibility antigen, DRB1 beta chain (266 aa).

The signal sequence occupies residues 1-29; it reads MVCLKLPGGSCMTALTVTLMVLSSPLALS. The segment at 30 to 124 is beta-1; it reads GDTRPRFLWQ…VESFTVQRRV (95 aa). The Extracellular portion of the chain corresponds to 30-227; the sequence is GDTRPRFLWQ…RARSESAQSK (198 aa). The cysteines at positions 44 and 108 are disulfide-linked. An N-linked (GlcNAc...) asparagine glycan is attached at Asn48. Residues Asp86, Trp90, His110, Asn111, and Arg122 each contribute to the a peptide antigen site. Positions 125 to 227 are beta-2; sequence QPKVTVYPSK…RARSESAQSK (103 aa). The 89-residue stretch at 126–214 folds into the Ig-like C1-type domain; sequence PKVTVYPSKT…EHPSVTSPLT (89 aa). Cysteines 146 and 202 form a disulfide. A helical membrane pass occupies residues 228–248; the sequence is MLSGVGGFVLGLLFLGAGLFI. Residues 249–266 are Cytoplasmic-facing; the sequence is YFRNQKGHSGLQPTGFLS. Lys254 participates in a covalent cross-link: Glycyl lysine isopeptide (Lys-Gly) (interchain with G-Cter in ubiquitin).

In terms of assembly, heterotrimer that consists of an alpha chain HLA-DRA, a beta chain HLA-DRB1 and a peptide (peptide-MHCII). Newly synthesized alpha and beta chains forms a heterodimer (MHCII) that associates with the CD74/invariant chain (Ii) in the endoplasmic reticulum (ER). Ii is a trimer composed of three subunits and each subunit interacts with one MHCII dimer, blocking the peptide-binding cleft. As a result, MHCII molecules cannot bind peptides present in the ER. The complex of MHCII and CD74/Ii is transported in vesicles from ER to Golgi to lysosomes, where it encounters antigenic peptides generated via proteolysis of endocytosed antigens. MHCII dimers are dissociated from CD74/Ii by the combined action of proteolysis and HLA-DM. Lysosomal enzymes such as cathepsin, degrade CD74/Ii leaving a 24 amino acid remnant called class II-associated Ii or CLIP. Interacts (via the peptide binding cleft) with CLIP; this interaction inhibits antigen peptide binding before entry in the endosomal compartment. The displacement of CLIP and replacement by a high affinity peptide in lysosomes is performed by HLA-DM heterodimer. HLA-DM catalyzes CLIP dissociation from MHCII, stabilizes empty MHCII and mediates the selection of high affinity peptides. Interacts with HLA-DM heterodimer; this interaction is direct. Interacts with TCR (via CDR3). Interacts (via beta-2 domain) with CD4 coreceptor (via Ig-like V-type domain); this interaction is of exceptionally low affinity yet necessary for optimal recognition of antigenic peptides. As to quaternary structure, (Microbial infection) Interacts with Staphylococcus aureus enterotoxin A/entA, enterotoxin B/entB, enterotoxin C1/entC1, enterotoxin D/entD and enterotoxin H/entH. Enterotoxins bind outside the peptide-binding cleft of MHCII: enterotoxin H/entH interacts via the beta-1 domain of MHCII and in a zinc-dependent way, whereas enterotoxin B/entB interacts primarily via the alpha-1 domain. (Microbial infection) Interacts with Epstein-Barr virus gp42 protein. Ubiquitinated by MARCHF1 and MARCHF8 at Lys-254 leading to sorting into the endosome system and down-regulation of MHCII. As to expression, expressed in professional APCs: monocyte/macrophages, dendritic cells and B cells (at protein level). Expressed in thymic epithelial cells (at protein level).

It is found in the cell membrane. The protein resides in the endoplasmic reticulum membrane. Its subcellular location is the lysosome membrane. The protein localises to the late endosome membrane. It localises to the autolysosome membrane. In terms of biological role, a beta chain of antigen-presenting major histocompatibility complex class II (MHCII) molecule. In complex with the alpha chain HLA-DRA, displays antigenic peptides on professional antigen presenting cells (APCs) for recognition by alpha-beta T cell receptor (TCR) on HLA-DRB1-restricted CD4-positive T cells. This guides antigen-specific T-helper effector functions, both antibody-mediated immune response and macrophage activation, to ultimately eliminate the infectious agents and transformed cells. Typically presents extracellular peptide antigens of 10 to 30 amino acids that arise from proteolysis of endocytosed antigens in lysosomes. In the tumor microenvironment, presents antigenic peptides that are primarily generated in tumor-resident APCs likely via phagocytosis of apoptotic tumor cells or macropinocytosis of secreted tumor proteins. Presents peptides derived from intracellular proteins that are trapped in autolysosomes after macroautophagy, a mechanism especially relevant for T cell selection in the thymus and central immune tolerance. The selection of the immunodominant epitopes follows two processing modes: 'bind first, cut/trim later' for pathogen-derived antigenic peptides and 'cut first, bind later' for autoantigens/self-peptides. The anchor residue at position 1 of the peptide N-terminus, usually a large hydrophobic residue, is essential for high affinity interaction with MHCII molecules. Functionally, allele DRB1*01:01: Displays an immunodominant epitope derived from Bacillus anthracis pagA/protective antigen, PA (KLPLYISNPNYKVNVYAVT), to both naive and PA-specific memory CD4-positive T cells. Presents immunodominant HIV-1 gag peptide (FRDYVDRFYKTLRAEQASQE) on infected dendritic cells for recognition by TRAV24-TRBV2 TCR on CD4-positive T cells and controls viral load. May present to T-helper 1 cells several HRV-16 epitopes derived from capsid proteins VP1 (PRFSLPFLSIASAYYMFYDG) and VP2 (PHQFINLRSNNSATLIVPYV), contributing to viral clearance. Displays commonly recognized peptides derived from IAV external protein HA (PKYVKQNTLKLAT and SNGNFIAPEYAYKIVK) and from internal proteins M, NP and PB1, with M-derived epitope (GLIYNRMGAVTTEV) being the most immunogenic. Presents a self-peptide derived from COL4A3 (GWISLWKGFSF) to TCR (TRAV14 biased) on CD4-positive, FOXP3-positive regulatory T cells and mediates immune tolerance to self. May present peptides derived from oncofetal trophoblast glycoprotein TPBG 5T4, known to be recognized by both T-helper 1 and regulatory T cells. Displays with low affinity a self-peptide derived from MBP (VHFFKNIVTPRTP). Its function is as follows. Allele DRB1*03:01: May present to T-helper 1 cells an HRV-16 epitope derived from capsid protein VP2 (NEKQPSDDNWLNFDGTLLGN), contributing to viral clearance. Displays self-peptides derived from retinal SAG (NRERRGIALDGKIKHE) and thyroid TG (LSSVVVDPSIRHFDV). Presents viral epitopes derived from HHV-6B gH/U48 and U85 antigens to polyfunctional CD4-positive T cells with cytotoxic activity implicated in control of HHV-6B infection. Presents several immunogenic epitopes derived from C.tetani neurotoxin tetX, playing a role in immune recognition and long-term protection. Allele DRB1*04:01: Presents an immunodominant bacterial epitope derived from M.tuberculosis esxB/culture filtrate antigen CFP-10 (EISTNIRQAGVQYSR), eliciting CD4-positive T cell effector functions such as IFNG production and cytotoxic activity. May present to T-helper 1 cells an HRV-16 epitope derived from capsid protein VP2 (NEKQPSDDNWLNFDGTLLGN), contributing to viral clearance. Presents tumor epitopes derived from melanoma-associated TYR antigen (QNILLSNAPLGPQFP and DYSYLQDSDPDSFQD), triggering CD4-positive T cell effector functions such as GMCSF production. Displays preferentially citrullinated self-peptides derived from VIM (GVYATR/citSSAVR and SAVRAR/citSSVPGVR) and ACAN (VVLLVATEGR/ CitVRVNSAYQDK). Displays self-peptides derived from COL2A1. In terms of biological role, allele DRB1*04:02: Displays native or citrullinated self-peptides derived from VIM. Functionally, allele DRB1*04:04: May present to T-helper 1 cells several HRV-16 epitopes derived from capsid proteins VP1 (HIVMQYMYVPPGAPIPTTRN) and VP2 (RGDSTITSQDVANAVVGYGV), contributing to viral clearance. Displays preferentially citrullinated self-peptides derived from VIM (SAVRAR/citSSVPGVR). Its function is as follows. Allele DRB1*04:05: May present to T-helper 1 cells an immunogenic epitope derived from tumor-associated antigen WT1 (KRYFKLSHLQMHSRKH), likely providing for effective antitumor immunity in a wide range of solid and hematological malignancies. Allele DRB1*05:01: Presents an immunodominant HIV-1 gag peptide (FRDYVDRFYKTLRAEQASQE) on infected dendritic cells for recognition by TRAV24-TRBV2 TCR on CD4-positive T cells and controls viral load. In terms of biological role, allele DRB1*07:01: Upon EBV infection, presents latent antigen EBNA2 peptide (PRSPTVFYNIPPMPLPPSQL) to CD4-positive T cells, driving oligoclonal expansion and selection of a dominant virus-specific memory T cell subset with cytotoxic potential to directly eliminate virus-infected B cells. May present to T-helper 1 cells several HRV-16 epitopes derived from capsid proteins VP1 (PRFSLPFLSIASAYYMFYDG) and VP2 (VPYVNAVPMDSMVRHNNWSL), contributing to viral clearance. In the context of tumor immunesurveillance, may present to T-helper 1 cells an immunogenic epitope derived from tumor-associated antigen WT1 (MTEYKLVVVGAVGVGKSALTIQLI), likely providing for effective antitumor immunity in a wide range of solid and hematological malignancies. In metastatic epithelial tumors, presents to intratumoral CD4-positive T cells a KRAS neoantigen (MTEYKLVVVGAVGVGKSALTIQLI) carrying G12V hotspot driver mutation and may mediate tumor regression. Functionally, allele DRB1*11:01: Displays an immunodominant HIV-1 gag peptide (FRDYVDRFYKTLRAEQASQE) on infected dendritic cells for recognition by TRAV24-TRBV2 TCR on CD4-positive T cells and controls viral load. May present to T-helper 1 cells an HRV-16 epitope derived from capsid protein VP2 (SDRIIQITRGDSTITSQDVA), contributing to viral clearance. Presents several immunogenic epitopes derived from C.tetani neurotoxin tetX, playing a role in immune recognition and longterm protection. In the context of tumor immunesurveillance, may present tumor-derived neoantigens to CD4-positive T cells and trigger anti-tumor helper functions. Its function is as follows. Allele DRB1*13:01: Presents viral epitopes derived from HHV-6B antigens to polyfunctional CD4-positive T cells implicated in control of HHV-6B infection. Allele DRB1*15:01: May present to T-helper 1 cells an HRV-16 epitope derived from capsid protein VP2 (SNNSATLIVPYVNAVPMDSM), contributing to viral clearance. Displays a self-peptide derived from MBP (ENPVVHFFKNIVTPR). May present to T-helper 1 cells an immunogenic epitope derived from tumor-associated antigen WT1 (KRYFKLSHLQMHSRKH), likely providing for effective antitumor immunity in a wide range of solid and hematological malignancies. In terms of biological role, allele DRB1*15:02: Displays an immunodominant HIV-1 gag peptide (FRDYVDRFYKTLRAEQASQE) on infected dendritic cells for recognition by TRAV24-TRBV2 TCR on CD4-positive T cells and controls viral load. May present to T-helper 1 cells an immunogenic epitope derived from tumor-associated antigen WT1 (KRYFKLSHLQMHSRKH), likely providing for effective antitumor immunity in a wide range of solid and hematological malignancies. Functionally, (Microbial infection) Acts as a receptor for Epstein-Barr virus on lymphocytes. The polypeptide is HLA class II histocompatibility antigen, DRB1 beta chain (Homo sapiens (Human)).